We begin with the raw amino-acid sequence, 436 residues long: Magnesium transporter MRS2-B (436 aa).

Low complexity-rich tracts occupy residues 1–14 (MSAAAASSAAGDSA) and 29–54 (VASVSSPSLPSAPPGALAGGRRFPGG). Residues 1–60 (MSAAAASSAAGDSAKQPLLHHQRGNPPHVASVSSPSLPSAPPGALAGGRRFPGGLDVPNL) form a disordered region. Residues 176-242 (LALEAACSFL…RDEIEQLMDD (67 aa)) are a coiled coil. 2 consecutive transmembrane segments (helical) span residues 372-392 (LLLTTATFVVAIFGVVAGIFG) and 408-428 (WVLIITGVIGAFIFCGFLWFF). A Required for magnesium transport activity motif is present at residues 392–394 (GMN).

It belongs to the CorA metal ion transporter (MIT) (TC 1.A.35.5) family.

The protein localises to the membrane. Functionally, magnesium transporter that may mediate the influx of magnesium. The polypeptide is Magnesium transporter MRS2-B (MRS2-B) (Oryza sativa subsp. indica (Rice)).